The following is a 63-amino-acid chain: Bowman-Birk type proteinase inhibitor (63 aa).

7 cysteine pairs are disulfide-bonded: Cys-8–Cys-61, Cys-9–Cys-24, Cys-12–Cys-57, Cys-14–Cys-22, Cys-31–Cys-38, Cys-35–Cys-50, and Cys-40–Cys-48.

It belongs to the Bowman-Birk serine protease inhibitor family.

Functionally, this inhibitor has two domains, each with separate antiprotease activity. Inhibits bovine trypsin and chymotrypsin, in a molar ratio of 1:1. The trypsin inhibition of FBI is independent of chymotrypsin inhibition, but the chymotrypsin inhibition is not completely independent of trypsin inhibition. The chain is Bowman-Birk type proteinase inhibitor from Vicia faba (Broad bean).